The chain runs to 128 residues: Holo-[acyl-carrier-protein] synthase (128 aa).

The Mg(2+) site is built by aspartate 10 and glutamate 59.

The protein belongs to the P-Pant transferase superfamily. AcpS family. The cofactor is Mg(2+).

Its subcellular location is the cytoplasm. It catalyses the reaction apo-[ACP] + CoA = holo-[ACP] + adenosine 3',5'-bisphosphate + H(+). Functionally, transfers the 4'-phosphopantetheine moiety from coenzyme A to a Ser of acyl-carrier-protein. The chain is Holo-[acyl-carrier-protein] synthase from Syntrophotalea carbinolica (strain DSM 2380 / NBRC 103641 / GraBd1) (Pelobacter carbinolicus).